The chain runs to 87 residues: UPF0250 protein PC1_1177 (87 aa).

The protein belongs to the UPF0250 family.

The protein is UPF0250 protein PC1_1177 of Pectobacterium carotovorum subsp. carotovorum (strain PC1).